Here is a 308-residue protein sequence, read N- to C-terminus: Pycsar effector protein PaPycTIR (308 aa).

54–143 (LITEDAEDSE…RQVTRQLVDR (90 aa)) is an a nucleoside 3',5'-cyclic phosphate binding site. A TIR-like region spans residues 160-278 (VFIICSVEAL…DLKGLTTIGY (119 aa)).

The protein localises to the cytoplasm. It catalyses the reaction NAD(+) + H2O = ADP-D-ribose + nicotinamide + H(+). Pycsar (pyrimidine cyclase system for antiphage resistance) provides immunity against bacteriophage. The pyrimidine cyclase (PycC) synthesizes cyclic nucleotides in response to infection; these serve as specific second messenger signals. The signals activate the adjacent effector, leading to bacterial cell death and abortive phage infection. A clade A Pycsar system. Functionally, the effector gene of a two-gene Pycsar system. Expression of this and adjacent uridylate cyclase PaPycC (AC P0DV40) probably confers resistance to bacteriophage. The genes are probably only expressed in response to bacteriophage infection. Probably only responds to cUMP (produced by its cognate NTP cyclase), acts by depleting cellular NAD(+) levels. The chain is Pycsar effector protein PaPycTIR from Pseudomonas aeruginosa.